Here is a 330-residue protein sequence, read N- to C-terminus: Ketol-acid reductoisomerase (NADP(+)) (330 aa).

The region spanning 2 to 182 (ARLYYDTDAN…GGTRAGILET (181 aa)) is the KARI N-terminal Rossmann domain. NADP(+) contacts are provided by residues 25 to 28 (YGSQ), Ser51, Ser53, and 83 to 86 (DEVQ). Residue His108 is part of the active site. Residue Gly134 coordinates NADP(+). Positions 183-328 (TFREETETDL…RELRAMFSWL (146 aa)) constitute a KARI C-terminal knotted domain. Mg(2+) contacts are provided by Asp191, Glu195, Glu227, and Glu231. Substrate is bound at residue Ser252.

The protein belongs to the ketol-acid reductoisomerase family. Requires Mg(2+) as cofactor.

It carries out the reaction (2R)-2,3-dihydroxy-3-methylbutanoate + NADP(+) = (2S)-2-acetolactate + NADPH + H(+). It catalyses the reaction (2R,3R)-2,3-dihydroxy-3-methylpentanoate + NADP(+) = (S)-2-ethyl-2-hydroxy-3-oxobutanoate + NADPH + H(+). It functions in the pathway amino-acid biosynthesis; L-isoleucine biosynthesis; L-isoleucine from 2-oxobutanoate: step 2/4. Its pathway is amino-acid biosynthesis; L-valine biosynthesis; L-valine from pyruvate: step 2/4. Its function is as follows. Involved in the biosynthesis of branched-chain amino acids (BCAA). Catalyzes an alkyl-migration followed by a ketol-acid reduction of (S)-2-acetolactate (S2AL) to yield (R)-2,3-dihydroxy-isovalerate. In the isomerase reaction, S2AL is rearranged via a Mg-dependent methyl migration to produce 3-hydroxy-3-methyl-2-ketobutyrate (HMKB). In the reductase reaction, this 2-ketoacid undergoes a metal-dependent reduction by NADPH to yield (R)-2,3-dihydroxy-isovalerate. This chain is Ketol-acid reductoisomerase (NADP(+)), found in Synechococcus sp. (strain JA-2-3B'a(2-13)) (Cyanobacteria bacterium Yellowstone B-Prime).